Consider the following 123-residue polypeptide: Large ribosomal subunit protein uL14 (123 aa).

The protein belongs to the universal ribosomal protein uL14 family. Part of the 50S ribosomal subunit. Forms a cluster with proteins L3 and L19. In the 70S ribosome, L14 and L19 interact and together make contacts with the 16S rRNA in bridges B5 and B8.

In terms of biological role, binds to 23S rRNA. Forms part of two intersubunit bridges in the 70S ribosome. The protein is Large ribosomal subunit protein uL14 of Photobacterium profundum (strain SS9).